A 259-amino-acid chain; its full sequence is uncharacterized protein (259 aa).

His-9, His-11, Glu-97, His-133, His-157, and Asp-207 together coordinate a divalent metal cation.

The protein belongs to the metallo-dependent hydrolases superfamily. TatD-type hydrolase family. A divalent metal cation serves as cofactor.

This is an uncharacterized protein from Escherichia coli (strain K12).